Here is an 837-residue protein sequence, read N- to C-terminus: Thioredoxin domain-containing protein 3 homolog (837 aa).

The Thioredoxin domain maps to Glu6–Gln115. Cys39 and Cys42 are disulfide-bonded. NDK stretches follow at residues Lys201 to Ile345, Ile355 to Gln491, and Thr493 to Pro629. The tract at residues Val633–Ser837 is disordered. Residues Ala638–Val647 are compositionally biased toward polar residues. The segment covering Glu652 to Gln670 has biased composition (acidic residues). Low complexity-rich tracts occupy residues Ala671–Glu707, Gln718–Thr752, and Ala766–Gln787. A compositionally biased stretch (gly residues) spans Ala805–Glu819. A compositionally biased stretch (basic and acidic residues) spans Gly820–Ser837.

The protein in the C-terminal section; belongs to the NDK family. As to quaternary structure, monomer. Testis-specific. In sperm, it is a component of the arm dynein of sperm axoneme.

Probably required during the final stages of sperm tail maturation in the testis and/or epididymis, where extensive disulfide bonding of fibrous sheath (FS) proteins occurs. In vitro, it has neither nucleoside diphosphate kinase (NDPK) activity nor reducing activity on disulfide bonds. Exhibits a 3'-5' exonuclease activity with a preference for single-stranded DNA, suggesting roles in DNA proofreading and repair. This Heliocidaris crassispina (Sea urchin) protein is Thioredoxin domain-containing protein 3 homolog (NME8).